The chain runs to 221 residues: MARITSEEMKERLAVYFIMGSQNSERPAEDVLKEALDGGVTLFQFREKGSAALEGEEKEALARQLQRLCRTYGVPFIVNDDVELAIAIDADGVHVGQDDEDARRVREKIGDKILGVSAHNVEEARAAIEAGADYIGVGPIYPTRSKDDANEAQGPGILRHLREQGITIPIVAIGGITADNTRAVIEAGADGVSVISAIASAPEPKAAAAALATAVREANLR.

Residues 44 to 48 (QFREK) and Asn79 each bind 4-amino-2-methyl-5-(diphosphooxymethyl)pyrimidine. Mg(2+) is bound by residues Asp80 and Asp99. Ser117 contributes to the 4-amino-2-methyl-5-(diphosphooxymethyl)pyrimidine binding site. 143 to 145 (TRS) lines the 2-[(2R,5Z)-2-carboxy-4-methylthiazol-5(2H)-ylidene]ethyl phosphate pocket. Lys146 lines the 4-amino-2-methyl-5-(diphosphooxymethyl)pyrimidine pocket. Residues Gly175 and 195-196 (IS) each bind 2-[(2R,5Z)-2-carboxy-4-methylthiazol-5(2H)-ylidene]ethyl phosphate.

Belongs to the thiamine-phosphate synthase family. Mg(2+) serves as cofactor.

The catalysed reaction is 2-[(2R,5Z)-2-carboxy-4-methylthiazol-5(2H)-ylidene]ethyl phosphate + 4-amino-2-methyl-5-(diphosphooxymethyl)pyrimidine + 2 H(+) = thiamine phosphate + CO2 + diphosphate. It catalyses the reaction 2-(2-carboxy-4-methylthiazol-5-yl)ethyl phosphate + 4-amino-2-methyl-5-(diphosphooxymethyl)pyrimidine + 2 H(+) = thiamine phosphate + CO2 + diphosphate. It carries out the reaction 4-methyl-5-(2-phosphooxyethyl)-thiazole + 4-amino-2-methyl-5-(diphosphooxymethyl)pyrimidine + H(+) = thiamine phosphate + diphosphate. Its pathway is cofactor biosynthesis; thiamine diphosphate biosynthesis; thiamine phosphate from 4-amino-2-methyl-5-diphosphomethylpyrimidine and 4-methyl-5-(2-phosphoethyl)-thiazole: step 1/1. Condenses 4-methyl-5-(beta-hydroxyethyl)thiazole monophosphate (THZ-P) and 2-methyl-4-amino-5-hydroxymethyl pyrimidine pyrophosphate (HMP-PP) to form thiamine monophosphate (TMP). The protein is Thiamine-phosphate synthase of Geobacillus thermodenitrificans (strain NG80-2).